A 141-amino-acid polypeptide reads, in one-letter code: Hemoglobin subunit alpha (141 aa).

One can recognise a Globin domain in the interval 1–141; the sequence is VLSANDKANV…VSTVLTSKYR (141 aa). Serine 3 bears the Phosphoserine mark. Residues lysine 7 and lysine 11 each carry the N6-succinyllysine modification. Lysine 16 is modified (N6-acetyllysine; alternate). Residue lysine 16 is modified to N6-succinyllysine; alternate. The residue at position 24 (tyrosine 24) is a Phosphotyrosine. Serine 35 bears the Phosphoserine mark. At lysine 40 the chain carries N6-succinyllysine. The residue at position 49 (serine 49) is a Phosphoserine. Histidine 58 is a binding site for O2. Histidine 87 lines the heme b pocket. At serine 102 the chain carries Phosphoserine. At threonine 108 the chain carries Phosphothreonine. Phosphoserine occurs at positions 124 and 131. Phosphothreonine occurs at positions 134 and 137. Position 138 is a phosphoserine (serine 138).

This sequence belongs to the globin family. In terms of assembly, heterotetramer of two alpha chains and two beta chains. As to expression, red blood cells.

Involved in oxygen transport from the lung to the various peripheral tissues. In terms of biological role, hemopressin acts as an antagonist peptide of the cannabinoid receptor CNR1. Hemopressin-binding efficiently blocks cannabinoid receptor CNR1 and subsequent signaling. This is Hemoglobin subunit alpha (HBA) from Suncus murinus (Asian house shrew).